Consider the following 650-residue polypeptide: SUMO-activating enzyme subunit 2 (650 aa).

ATP-binding positions include 25–30 (GAGGIG), Asp49, 57–60 (NLNR), Lys73, 96–97 (SI), and 118–123 (DNRAAR). Residues Cys159 and Cys162 each coordinate Zn(2+). Cys174 functions as the Glycyl thioester intermediate in the catalytic mechanism. Lys191 participates in a covalent cross-link: Glycyl lysine isopeptide (Lys-Gly) (interchain with G-Cter in SUMO). Lys237 is covalently cross-linked (Glycyl lysine isopeptide (Lys-Gly) (interchain with G-Cter in SUMO1)). Glycyl lysine isopeptide (Lys-Gly) (interchain with G-Cter in SUMO) cross-links involve residues Lys258, Lys282, and Lys286. Zn(2+)-binding residues include Cys446 and Cys449. The segment at 554 to 650 (DAPDKAPAPS…DDDEDIIALD (97 aa)) is disordered. Positions 572–586 (ANGNKDSAQPSTSSK) are enriched in polar residues. The segment covering 590 to 603 (EDDDVLLVDSDEEP) has biased composition (acidic residues). Phosphoserine is present on Ser599. Residues Lys618 and Lys630 each participate in a glycyl lysine isopeptide (Lys-Gly) (interchain with G-Cter in SUMO) cross-link. A compositionally biased stretch (acidic residues) spans 638–650 (PADDDDEDIIALD).

Belongs to the ubiquitin-activating E1 family. In terms of assembly, heterodimer of sae1 and uba2/sae2. The heterodimer corresponds to the two domains that are encoded on a single polypeptide chain in ubiquitin-activating enzyme E1. Interacts with ube2i. Post-translationally, sumoylated with SUMO1 and SUMO2/3 and by UBC9. Sumoylation at Lys-237 inhibits enzymatic activity. Sumoylation at the C-terminal lysine cluster plays an essential role in nuclear trafficking. Expressed in eye, brain and pectoral fins.

The protein localises to the cytoplasm. Its subcellular location is the nucleus. The protein operates within protein modification; protein sumoylation. Its function is as follows. The heterodimer acts as an E1 ligase for sumo1, sumo2, and sumo3. It mediates ATP-dependent activation of sumo proteins followed by formation of a thioester bond between a sumo protein and a conserved active site cysteine residue on uba2/sae2. The protein is SUMO-activating enzyme subunit 2 (uba2) of Danio rerio (Zebrafish).